We begin with the raw amino-acid sequence, 561 residues long: 3-hydroxy-3-methylglutaryl-coenzyme A reductase 3 (561 aa).

Helical transmembrane passes span 25 to 45 (PIRH…AYLM) and 69 to 89 (IFGL…AFVQ). Residues 90–145 (SIVSSSDDEEEDFLVGPARGSSAAAAVAPPPPPSSPAQCSLLGSPHDDAARERMPE) are linker. The disordered stretch occupies residues 113-146 (AAAVAPPPPPSSPAQCSLLGSPHDDAARERMPEE). Positions 134–143 (PHDDAARERM) are enriched in basic and acidic residues. Positions 146–561 (EDEEIVSSVV…SSKDMSKVIS (416 aa)) are catalytic. The active-site Charge relay system is glutamate 240. Asparagine 304 carries an N-linked (GlcNAc...) asparagine glycan. Active-site charge relay system residues include lysine 372 and aspartate 448. Residue histidine 546 is the Proton donor of the active site. N-linked (GlcNAc...) asparagine glycosylation is present at asparagine 550.

This sequence belongs to the HMG-CoA reductase family.

The protein resides in the endoplasmic reticulum membrane. It carries out the reaction (R)-mevalonate + 2 NADP(+) + CoA = (3S)-3-hydroxy-3-methylglutaryl-CoA + 2 NADPH + 2 H(+). It participates in metabolic intermediate biosynthesis; (R)-mevalonate biosynthesis; (R)-mevalonate from acetyl-CoA: step 3/3. Catalyzes the synthesis of mevalonate. The specific precursor of all isoprenoid compounds present in plants. This is 3-hydroxy-3-methylglutaryl-coenzyme A reductase 3 (HMG3) from Oryza sativa subsp. japonica (Rice).